The chain runs to 636 residues: Epsin-3 (636 aa).

Positions 8, 11, 25, 30, 63, and 73 each coordinate a 1,2-diacyl-sn-glycero-3-phospho-(1D-myo-inositol-4,5-bisphosphate). One can recognise an ENTH domain in the interval 12–144; that stretch reads NIVHNYSEAE…KDEERLRQER (133 aa). The segment at 153 to 503 is disordered; sequence RMALEGMGIG…TPESFLGPSA (351 aa). Low complexity predominate over residues 174–189; sequence GSPSSYTSASSSPRYA. Serine 184 and serine 185 each carry phosphoserine. UIM domains lie at 202–221 and 229–248; these read EEELQLQLALAMSREEAERP and DEDLQLQLALSLSRQEHEKG. Composition is skewed to basic and acidic residues over residues 214–231 and 242–256; these read SREEAERPVPPASHRDED and RQEHEKGVRSWKGDD. Serine 257 is subject to Phosphoserine. Basic and acidic residues predominate over residues 270–288; the sequence is RQRDREPEREERKEEEKLK. 5 repeat units span residues 315 to 317, 338 to 340, 365 to 367, 381 to 383, and 398 to 400. Residues 315–400 are 5 X 3 AA repeats of [DE]-P-W; it reads DPWDIPGLRP…KLPSTGADPW (86 aa). Residues 426 to 435 show a composition bias toward basic and acidic residues; that stretch reads ESTEPKESRD. Tandem repeats lie at residues 523–525 and 536–538. Residues 523–635 are 3 X 3 AA repeats of N-P-F; the sequence is NPFLTGLGVP…LPPQAGTNPF (113 aa). The span at 607–616 shows a compositional bias: pro residues; sequence PPPASLPQPL. Positions 607-636 are disordered; the sequence is PPPASLPQPLLPTSGPMGPLPPQAGTNPFL. Repeat 3 spans residues 633–635; it reads NPF.

The protein belongs to the epsin family.

The protein localises to the cytoplasm. It localises to the cell cortex. Its subcellular location is the perinuclear region. It is found in the cytoplasmic vesicle. The protein resides in the clathrin-coated vesicle. The polypeptide is Epsin-3 (Epn3) (Mus musculus (Mouse)).